The primary structure comprises 356 residues: MLTLSDFDFDLPPELIAQTALPDRTASRLLAARHDAQGTHFDDRQFADLVDYLRPGDLLVFNDTRVIKARFFGHKASGGKIEVLVERLLDEHTVLAQIRSSKSPVAGSTLRLADAFDVTVGPRHEPFFTLRFPQPALELIEQYGRLPLPPYIEHTPDSFDETRYQTVYARTPGAVAAPTAGLHFDDALFARLDAMGVRRGFLTLHVGAGTFSPVRVENIAEHRMHSEWYAISPDLAEAIRATRAVGGRIVAVGTTSMRALESAAQPDGTLAAGSGETDIFITPGYRFRLVDALVTNFHLPKSTLLMLVSAFAGLETIRAAYRHAIAQRYRFFSYGDAMFLTRAEPDTQSASPDPSC.

The protein belongs to the QueA family. In terms of assembly, monomer.

It localises to the cytoplasm. It carries out the reaction 7-aminomethyl-7-carbaguanosine(34) in tRNA + S-adenosyl-L-methionine = epoxyqueuosine(34) in tRNA + adenine + L-methionine + 2 H(+). The protein operates within tRNA modification; tRNA-queuosine biosynthesis. Functionally, transfers and isomerizes the ribose moiety from AdoMet to the 7-aminomethyl group of 7-deazaguanine (preQ1-tRNA) to give epoxyqueuosine (oQ-tRNA). This Ralstonia nicotianae (strain ATCC BAA-1114 / GMI1000) (Ralstonia solanacearum) protein is S-adenosylmethionine:tRNA ribosyltransferase-isomerase.